An 894-amino-acid polypeptide reads, in one-letter code: Transcriptional activator/repressor GIS1 (894 aa).

The region spanning valine 12–leucine 53 is the JmjN domain. A Phosphoserine modification is found at serine 70. A coiled-coil region spans residues glutamate 90–leucine 110. Residues proline 170–cysteine 324 enclose the JmjC domain. The Bipartite nuclear localization signal motif lies at arginine 316–lysine 332. The segment at cysteine 324–asparagine 355 is disordered. A compositionally biased stretch (polar residues) spans proline 335 to aspartate 354. The residue at position 343 (serine 343) is a Phosphoserine. Positions glutamine 361–asparagine 385 form a coiled coil. Positions asparagine 521–threonine 554 are enriched in low complexity. The disordered stretch occupies residues asparagine 521 to glycine 558. Phosphoserine is present on residues serine 690, serine 694, serine 696, serine 734, and serine 747. Residues leucine 756–asparagine 768 are compositionally biased toward low complexity. The interval leucine 756–histidine 810 is disordered. Polar residues-rich tracts occupy residues phenylalanine 769–leucine 785 and tyrosine 795–histidine 810. The C2H2-type 1 zinc finger occupies tyrosine 828–histidine 851. Residues histidine 857 to cysteine 882 form a C2H2-type 2; atypical zinc finger.

Its subcellular location is the nucleus. Transcription factor involved in the regulation of gene expression upon nutrient starvation. Recognizes and binds to the post-diauxic-shift element 5'-T[AT]AGGGAT-3' in the promoter region. Can act as a transcriptional activator (e.g. of stress genes like SSA3, HSP12 and HSP26) as well as a repressor (e.g. of pyrophosphate phosphatase DPP1). GIS1 also acts as a DNA damage-responsive transcriptional repressor of photolyase PHR1. The protein is Transcriptional activator/repressor GIS1 (GIS1) of Saccharomyces cerevisiae (strain ATCC 204508 / S288c) (Baker's yeast).